A 902-amino-acid chain; its full sequence is Cysteine-tryptophan domain-containing zinc finger protein 3 (902 aa).

The segment at 21–74 (VLIEDNWVCCDMCHKWRLLPYGTNTSMLPKKWICSMLDWLPGMNKCDISEDETT) adopts a CW-type zinc-finger fold. Zn(2+)-binding residues include C30, C33, C54, and C66. Disordered stretches follow at residues 131–233 (EHDQ…EDRH), 326–345 (EDNR…NENL), 420–480 (QSST…LNAD), and 537–651 (HGPT…SASP). 2 stretches are compositionally biased toward basic and acidic residues: residues 151–169 (KNRE…DPVS) and 193–203 (SHSDGGDLTEK). Residues 204-213 (SKKHSKSKNR) are compositionally biased toward basic residues. Basic and acidic residues-rich tracts occupy residues 214–233 (RGID…EDRH) and 335–345 (HTSKGGDNENL). A compositionally biased stretch (low complexity) spans 421–433 (SSTVATSSSSKVS). 3 stretches are compositionally biased toward polar residues: residues 450–463 (ESVS…SNTD), 564–588 (NSAP…QIEM), and 599–611 (IDNQ…IGQD). Positions 612–625 (NHSHMKEGKSEVHT) are enriched in basic and acidic residues. Residues 634 to 648 (KNHTQLRSNVENGDS) are compositionally biased toward polar residues.

Expressed in leaf sheaths, flag leaves, nodes, internodes and panicles.

The protein resides in the nucleus. Its function is as follows. Binds to histones H3K4me1, H3K4me2 and H3K4me3 in GST pull-down assay. May facilitate the recruitment of effectors to mediate gene expression. This is Cysteine-tryptophan domain-containing zinc finger protein 3 from Oryza sativa subsp. japonica (Rice).